The primary structure comprises 606 residues: Phosphogluconate dehydratase (606 aa).

[4Fe-4S] cluster-binding residues include Cys-156 and Cys-223.

It belongs to the IlvD/Edd family. [4Fe-4S] cluster is required as a cofactor.

The catalysed reaction is 6-phospho-D-gluconate = 2-dehydro-3-deoxy-6-phospho-D-gluconate + H2O. It participates in carbohydrate metabolism; Entner-Doudoroff pathway. Functionally, catalyzes the dehydration of 6-phospho-D-gluconate to 2-dehydro-3-deoxy-6-phospho-D-gluconate. This is Phosphogluconate dehydratase from Rhizobium meliloti (strain 1021) (Ensifer meliloti).